The primary structure comprises 112 residues: Protein SMALL AUXIN UP-REGULATED RNA 10 (112 aa).

Belongs to the ARG7 family. Confined to the veins and petioles of rosette leaves and cauline leaves, and specifically expressed at the abaxial side of inflorescence branche; relocates to both the adaxial (Ad) and abaxial (Ab) sides of the branch in reduced red:far-red (R:FR) light, during shade. Also present in flowers.

Its subcellular location is the cell membrane. Functionally, provide a mechanistic link between auxin and plasma membrane H(+)-ATPases (PM H(+)-ATPases, e.g. AHA1 and AHA2), and triggers PM H(+)-ATPases activity by promoting phosphorylation of their C-terminal autoinhibitory domain as a result of PP2C-D subfamily of type 2C phosphatases inhibition, thus leading to the acidification of the apoplast and the facilitation of solutes and water uptake to drive cell expansion. Triggers plant growth probably by promoting cell elongation. Regulates branch angles and bending. This is Protein SMALL AUXIN UP-REGULATED RNA 10 from Arabidopsis thaliana (Mouse-ear cress).